The following is a 78-amino-acid chain: Small ribosomal subunit protein bS18 (78 aa).

Belongs to the bacterial ribosomal protein bS18 family. In terms of assembly, part of the 30S ribosomal subunit. Forms a tight heterodimer with protein bS6.

In terms of biological role, binds as a heterodimer with protein bS6 to the central domain of the 16S rRNA, where it helps stabilize the platform of the 30S subunit. The protein is Small ribosomal subunit protein bS18 of Clostridium novyi (strain NT).